We begin with the raw amino-acid sequence, 494 residues long: Anaerobic nitric oxide reductase flavorubredoxin (494 aa).

The tract at residues 30–210 (TKGTSYNSYL…PFSALVTAKI (181 aa)) is zinc metallo-hydrolase. Histidine 79, glutamate 81, aspartate 83, histidine 147, aspartate 166, and histidine 227 together coordinate Fe cation. Residues 254 to 393 (ITIFYDSMSN…ECREHGQQIA (140 aa)) form the Flavodoxin-like domain. FMN is bound by residues 260–264 (SMSNN) and 342–369 (AFGS…ETAI). In terms of domain architecture, Rubredoxin-like spans 441–492 (CQCMVCTVCNWVYDPAKGEPNQGIEVGTTWADVPDYFLCPECHLGKDVFVEY). The Fe cation site is built by cysteine 446, cysteine 449, cysteine 479, and cysteine 482.

This sequence in the N-terminal section; belongs to the zinc metallo-hydrolase group 3 family. Homotetramer. It depends on Fe cation as a cofactor. FMN serves as cofactor.

It localises to the cytoplasm. The protein operates within nitrogen metabolism; nitric oxide reduction. Functionally, anaerobic nitric oxide reductase; uses NADH to detoxify nitric oxide (NO), protecting several 4Fe-4S NO-sensitive enzymes. Has at least 2 reductase partners, only one of which (NorW, flavorubredoxin reductase) has been identified. NO probably binds to the di-iron center; electrons enter from the NorW at rubredoxin and are transferred sequentially to the FMN center and the di-iron center. Also able to function as an aerobic oxygen reductase. The chain is Anaerobic nitric oxide reductase flavorubredoxin from Vibrio vulnificus (strain YJ016).